Consider the following 131-residue polypeptide: Sec-independent protein translocase protein TatB (131 aa).

The chain crosses the membrane as a helical span at residues 2–22 (FANIGWGEMLVLVMVGLVVLG). Positions 90–131 (DSLFTGDFDRPTPKKPDAAGSAGPDATEQIGAGPIPFDSDAT) are disordered. Positions 96–106 (DFDRPTPKKPD) are enriched in basic and acidic residues.

Belongs to the TatB family. In terms of assembly, the Tat system comprises two distinct complexes: a TatABC complex, containing multiple copies of TatA, TatB and TatC subunits, and a separate TatA complex, containing only TatA subunits. Substrates initially bind to the TatABC complex, which probably triggers association of the separate TatA complex to form the active translocon.

It localises to the cell membrane. In terms of biological role, part of the twin-arginine translocation (Tat) system that transports large folded proteins containing a characteristic twin-arginine motif in their signal peptide across membranes. Together with TatC, TatB is part of a receptor directly interacting with Tat signal peptides. TatB may form an oligomeric binding site that transiently accommodates folded Tat precursor proteins before their translocation. This Mycobacterium bovis (strain ATCC BAA-935 / AF2122/97) protein is Sec-independent protein translocase protein TatB.